Reading from the N-terminus, the 208-residue chain is Crossover junction endodeoxyribonuclease RuvC (208 aa).

Active-site residues include Asp-9, Glu-70, and Asp-143. Positions 9, 70, and 143 each coordinate Mg(2+).

Belongs to the RuvC family. In terms of assembly, homodimer which binds Holliday junction (HJ) DNA. The HJ becomes 2-fold symmetrical on binding to RuvC with unstacked arms; it has a different conformation from HJ DNA in complex with RuvA. In the full resolvosome a probable DNA-RuvA(4)-RuvB(12)-RuvC(2) complex forms which resolves the HJ. Mg(2+) serves as cofactor.

It is found in the cytoplasm. It carries out the reaction Endonucleolytic cleavage at a junction such as a reciprocal single-stranded crossover between two homologous DNA duplexes (Holliday junction).. Functionally, the RuvA-RuvB-RuvC complex processes Holliday junction (HJ) DNA during genetic recombination and DNA repair. Endonuclease that resolves HJ intermediates. Cleaves cruciform DNA by making single-stranded nicks across the HJ at symmetrical positions within the homologous arms, yielding a 5'-phosphate and a 3'-hydroxyl group; requires a central core of homology in the junction. The consensus cleavage sequence is 5'-(A/T)TT(C/G)-3'. Cleavage occurs on the 3'-side of the TT dinucleotide at the point of strand exchange. HJ branch migration catalyzed by RuvA-RuvB allows RuvC to scan DNA until it finds its consensus sequence, where it cleaves and resolves the cruciform DNA. In Leifsonia xyli subsp. xyli (strain CTCB07), this protein is Crossover junction endodeoxyribonuclease RuvC.